The following is a 135-amino-acid chain: Glutaredoxin-C5 (135 aa).

A Glutaredoxin domain is found at 29 to 134; sequence AERVERLASE…PLLKEAGALW (106 aa). An intrachain disulfide couples Cys-49 to Cys-52. A Responsive for interaction with TGA factors motif is present at residues 132–135; that stretch reads ALWL.

The protein belongs to the glutaredoxin family. CC-type subfamily.

The protein resides in the cytoplasm. The protein localises to the nucleus. Its function is as follows. Has a glutathione-disulfide oxidoreductase activity in the presence of NADPH and glutathione reductase. Reduces low molecular weight disulfides and proteins. The protein is Glutaredoxin-C5 (GRXC5) of Oryza sativa subsp. japonica (Rice).